We begin with the raw amino-acid sequence, 507 residues long: Phytoene dehydrogenase (507 aa).

Position 12 to 45 (12 to 45 (VVVGAGLAGLAAALHLLGAGRRVTVVEREDVPGG)) interacts with FAD.

This sequence belongs to the carotenoid/retinoid oxidoreductase family. FAD is required as a cofactor.

It functions in the pathway carotenoid biosynthesis; lycopene biosynthesis. Functionally, this enzyme converts phytoene into zeta-carotene via the intermediary of phytofluene by the symmetrical introduction of two double bonds at the C-11 and C-11' positions of phytoene. The sequence is that of Phytoene dehydrogenase (crtI) from Streptomyces griseus.